Consider the following 287-residue polypeptide: 4-hydroxybenzoate octaprenyltransferase (287 aa).

9 helical membrane-spanning segments follow: residues 7 to 27 (FISY…LLLW), 30 to 50 (LWAL…LIFV), 94 to 114 (VAVA…LNAF), 118 to 138 (LSVL…FFAM), 142 to 162 (VLGI…LDFI), 167 to 187 (WFLF…YAMV), 209 to 229 (VVVI…VAQL), 235 to 255 (YFLV…KLVS), and 266 to 286 (FRHN…GLGV).

This sequence belongs to the UbiA prenyltransferase family. Mg(2+) is required as a cofactor.

It localises to the cell inner membrane. The enzyme catalyses all-trans-octaprenyl diphosphate + 4-hydroxybenzoate = 4-hydroxy-3-(all-trans-octaprenyl)benzoate + diphosphate. Its pathway is cofactor biosynthesis; ubiquinone biosynthesis. Functionally, catalyzes the prenylation of para-hydroxybenzoate (PHB) with an all-trans polyprenyl group. Mediates the second step in the final reaction sequence of ubiquinone-8 (UQ-8) biosynthesis, which is the condensation of the polyisoprenoid side chain with PHB, generating the first membrane-bound Q intermediate 3-octaprenyl-4-hydroxybenzoate. The polypeptide is 4-hydroxybenzoate octaprenyltransferase (Polynucleobacter necessarius subsp. necessarius (strain STIR1)).